Consider the following 460-residue polypeptide: Exodeoxyribonuclease 7 large subunit (460 aa).

Positions 438-460 (ARVEKVNREEEKQSGSQKNGTRD) are disordered. Positions 439–450 (RVEKVNREEEKQ) are enriched in basic and acidic residues. Residues 451 to 460 (SGSQKNGTRD) show a composition bias toward polar residues.

This sequence belongs to the XseA family. As to quaternary structure, heterooligomer composed of large and small subunits.

The protein localises to the cytoplasm. The catalysed reaction is Exonucleolytic cleavage in either 5'- to 3'- or 3'- to 5'-direction to yield nucleoside 5'-phosphates.. Its function is as follows. Bidirectionally degrades single-stranded DNA into large acid-insoluble oligonucleotides, which are then degraded further into small acid-soluble oligonucleotides. The protein is Exodeoxyribonuclease 7 large subunit of Brevibacillus brevis (strain 47 / JCM 6285 / NBRC 100599).